A 120-amino-acid chain; its full sequence is Acylphosphatase-1 (120 aa).

An N-acetylalanine modification is found at Ala-2. Residues Ser-8–Pro-98 form the Acylphosphatase-like domain. Catalysis depends on residues Arg-23 and Asn-41. Positions Tyr-91–Asn-120 are disordered. Residues Ile-96 to His-107 show a composition bias toward basic and acidic residues.

The protein belongs to the acylphosphatase family.

It is found in the cytoplasm. It catalyses the reaction an acyl phosphate + H2O = a carboxylate + phosphate + H(+). In Drosophila melanogaster (Fruit fly), this protein is Acylphosphatase-1 (Acyp).